The following is a 281-amino-acid chain: Bis(5'-nucleosyl)-tetraphosphatase, symmetrical (281 aa).

Belongs to the Ap4A hydrolase family.

The enzyme catalyses P(1),P(4)-bis(5'-adenosyl) tetraphosphate + H2O = 2 ADP + 2 H(+). Its function is as follows. Hydrolyzes diadenosine 5',5'''-P1,P4-tetraphosphate to yield ADP. This Pectobacterium carotovorum subsp. carotovorum (strain PC1) protein is Bis(5'-nucleosyl)-tetraphosphatase, symmetrical.